We begin with the raw amino-acid sequence, 123 residues long: Small ribosomal subunit protein uS12c (123 aa).

The protein belongs to the universal ribosomal protein uS12 family. As to quaternary structure, part of the 30S ribosomal subunit.

It is found in the plastid. The protein resides in the chloroplast. With S4 and S5 plays an important role in translational accuracy. Located at the interface of the 30S and 50S subunits. The sequence is that of Small ribosomal subunit protein uS12c (rps12) from Chlorokybus atmophyticus (Soil alga).